The primary structure comprises 246 residues: tRNA pseudouridine synthase A (246 aa).

D52 acts as the Nucleophile in catalysis. Y111 is a substrate binding site.

This sequence belongs to the tRNA pseudouridine synthase TruA family. Homodimer.

The catalysed reaction is uridine(38/39/40) in tRNA = pseudouridine(38/39/40) in tRNA. Functionally, formation of pseudouridine at positions 38, 39 and 40 in the anticodon stem and loop of transfer RNAs. This is tRNA pseudouridine synthase A from Borrelia garinii subsp. bavariensis (strain ATCC BAA-2496 / DSM 23469 / PBi) (Borreliella bavariensis).